The following is a 156-amino-acid chain: 6,7-dimethyl-8-ribityllumazine synthase (156 aa).

Residues Phe22, 57 to 59 (AVE), and 81 to 83 (TVI) each bind 5-amino-6-(D-ribitylamino)uracil. 86-87 (GT) contributes to the (2S)-2-hydroxy-3-oxobutyl phosphate binding site. The active-site Proton donor is the His89. Phe114 provides a ligand contact to 5-amino-6-(D-ribitylamino)uracil. Residue Arg128 participates in (2S)-2-hydroxy-3-oxobutyl phosphate binding.

It belongs to the DMRL synthase family. As to quaternary structure, forms an icosahedral capsid composed of 60 subunits, arranged as a dodecamer of pentamers.

It catalyses the reaction (2S)-2-hydroxy-3-oxobutyl phosphate + 5-amino-6-(D-ribitylamino)uracil = 6,7-dimethyl-8-(1-D-ribityl)lumazine + phosphate + 2 H2O + H(+). The protein operates within cofactor biosynthesis; riboflavin biosynthesis; riboflavin from 2-hydroxy-3-oxobutyl phosphate and 5-amino-6-(D-ribitylamino)uracil: step 1/2. Its function is as follows. Catalyzes the formation of 6,7-dimethyl-8-ribityllumazine by condensation of 5-amino-6-(D-ribitylamino)uracil with 3,4-dihydroxy-2-butanone 4-phosphate. This is the penultimate step in the biosynthesis of riboflavin. The sequence is that of 6,7-dimethyl-8-ribityllumazine synthase from Vibrio campbellii (strain ATCC BAA-1116).